The chain runs to 444 residues: Exodeoxyribonuclease 7 large subunit (444 aa).

It belongs to the XseA family. Heterooligomer composed of large and small subunits.

It localises to the cytoplasm. The catalysed reaction is Exonucleolytic cleavage in either 5'- to 3'- or 3'- to 5'-direction to yield nucleoside 5'-phosphates.. Its function is as follows. Bidirectionally degrades single-stranded DNA into large acid-insoluble oligonucleotides, which are then degraded further into small acid-soluble oligonucleotides. This Pseudoalteromonas atlantica (strain T6c / ATCC BAA-1087) protein is Exodeoxyribonuclease 7 large subunit.